The following is a 383-amino-acid chain: Arginine biosynthesis bifunctional protein ArgJ (383 aa).

Substrate-binding residues include T146, K168, T179, E259, N378, and S383. T179 serves as the catalytic Nucleophile.

Belongs to the ArgJ family. Heterotetramer of two alpha and two beta chains.

Its subcellular location is the cytoplasm. The catalysed reaction is N(2)-acetyl-L-ornithine + L-glutamate = N-acetyl-L-glutamate + L-ornithine. It catalyses the reaction L-glutamate + acetyl-CoA = N-acetyl-L-glutamate + CoA + H(+). It participates in amino-acid biosynthesis; L-arginine biosynthesis; L-ornithine and N-acetyl-L-glutamate from L-glutamate and N(2)-acetyl-L-ornithine (cyclic): step 1/1. The protein operates within amino-acid biosynthesis; L-arginine biosynthesis; N(2)-acetyl-L-ornithine from L-glutamate: step 1/4. In terms of biological role, catalyzes two activities which are involved in the cyclic version of arginine biosynthesis: the synthesis of N-acetylglutamate from glutamate and acetyl-CoA as the acetyl donor, and of ornithine by transacetylation between N(2)-acetylornithine and glutamate. This is Arginine biosynthesis bifunctional protein ArgJ from Streptomyces coelicolor (strain ATCC BAA-471 / A3(2) / M145).